The sequence spans 154 residues: 6,7-dimethyl-8-ribityllumazine synthase (154 aa).

Residues phenylalanine 23, 57 to 59 (AFE), and 81 to 83 (AVI) contribute to the 5-amino-6-(D-ribitylamino)uracil site. Position 86 to 87 (86 to 87 (ST)) interacts with (2S)-2-hydroxy-3-oxobutyl phosphate. The active-site Proton donor is histidine 89. Phenylalanine 114 lines the 5-amino-6-(D-ribitylamino)uracil pocket. Arginine 128 contacts (2S)-2-hydroxy-3-oxobutyl phosphate.

The protein belongs to the DMRL synthase family.

It carries out the reaction (2S)-2-hydroxy-3-oxobutyl phosphate + 5-amino-6-(D-ribitylamino)uracil = 6,7-dimethyl-8-(1-D-ribityl)lumazine + phosphate + 2 H2O + H(+). Its pathway is cofactor biosynthesis; riboflavin biosynthesis; riboflavin from 2-hydroxy-3-oxobutyl phosphate and 5-amino-6-(D-ribitylamino)uracil: step 1/2. Its function is as follows. Catalyzes the formation of 6,7-dimethyl-8-ribityllumazine by condensation of 5-amino-6-(D-ribitylamino)uracil with 3,4-dihydroxy-2-butanone 4-phosphate. This is the penultimate step in the biosynthesis of riboflavin. The polypeptide is 6,7-dimethyl-8-ribityllumazine synthase (Campylobacter jejuni subsp. doylei (strain ATCC BAA-1458 / RM4099 / 269.97)).